The sequence spans 484 residues: Protein phosphatase 1B (484 aa).

Residues M1–N14 are compositionally biased toward basic and acidic residues. Positions M1–N20 are disordered. G2 is lipidated: N-myristoyl glycine. A Glycyl lysine isopeptide (Lys-Gly) (interchain with G-Cter in ISG15) cross-link involves residue K12. In terms of domain architecture, PPM-type phosphatase spans R23–F295. Residues D60 and G61 each coordinate Mn(2+). A Glycyl lysine isopeptide (Lys-Gly) (interchain with G-Cter in ISG15) cross-link involves residue K142. The Mn(2+) site is built by D243 and D286. Position 391 is a phosphoserine (S391). Positions E431–L484 are disordered. Over residues T440–E456 the composition is skewed to polar residues.

This sequence belongs to the PP2C family. Monomer. Interacts with PAK6. Interacts with the phosphorylated form of IKBKB/IKKB. Requires Mg(2+) as cofactor. The cofactor is Mn(2+). In terms of processing, isgylation negatively regulates its activity. Post-translationally, N-myristoylation is essential for the recognition of its substrates for dephosphorylation.

Its subcellular location is the cytoplasm. The protein localises to the cytosol. It localises to the membrane. The catalysed reaction is O-phospho-L-seryl-[protein] + H2O = L-seryl-[protein] + phosphate. It catalyses the reaction O-phospho-L-threonyl-[protein] + H2O = L-threonyl-[protein] + phosphate. Functionally, enzyme with a broad specificity. Dephosphorylates PRKAA1 and PRKAA2. Inhibits TBK1-mediated antiviral signaling by dephosphorylating it at 'Ser-172'. Plays an important role in the termination of TNF-alpha-mediated NF-kappa-B activation through dephosphorylating and inactivating IKBKB/IKKB. The protein is Protein phosphatase 1B (PPM1B) of Bos taurus (Bovine).